Reading from the N-terminus, the 1083-residue chain is Error-prone DNA polymerase (1083 aa).

This sequence belongs to the DNA polymerase type-C family. DnaE2 subfamily.

Its subcellular location is the cytoplasm. It carries out the reaction DNA(n) + a 2'-deoxyribonucleoside 5'-triphosphate = DNA(n+1) + diphosphate. Functionally, DNA polymerase involved in damage-induced mutagenesis and translesion synthesis (TLS). It is not the major replicative DNA polymerase. The sequence is that of Error-prone DNA polymerase from Xanthomonas oryzae pv. oryzae (strain KACC10331 / KXO85).